The chain runs to 316 residues: HPr kinase/phosphorylase (316 aa).

Residues His143 and Lys164 contribute to the active site. ATP is bound at residue 158-165 (GEAGSGKS). Ser165 lines the Mg(2+) pocket. The active-site Proton acceptor; for phosphorylation activity. Proton donor; for dephosphorylation activity is the Asp182. Residues 206–215 (LEVRGLGVLN) form an important for the catalytic mechanism of both phosphorylation and dephosphorylation region. Mg(2+) is bound at residue Glu207. The active site involves Arg251. Positions 272-277 (PVMPGR) are important for the catalytic mechanism of dephosphorylation.

It belongs to the HPrK/P family. Homohexamer. It depends on Mg(2+) as a cofactor.

The catalysed reaction is [HPr protein]-L-serine + ATP = [HPr protein]-O-phospho-L-serine + ADP + H(+). It catalyses the reaction [HPr protein]-O-phospho-L-serine + phosphate + H(+) = [HPr protein]-L-serine + diphosphate. Catalyzes the ATP- as well as the pyrophosphate-dependent phosphorylation of a specific serine residue in HPr, a phosphocarrier protein of the phosphoenolpyruvate-dependent sugar phosphotransferase system (PTS). HprK/P also catalyzes the pyrophosphate-producing, inorganic phosphate-dependent dephosphorylation (phosphorolysis) of seryl-phosphorylated HPr (P-Ser-HPr). The protein is HPr kinase/phosphorylase of Xanthomonas oryzae pv. oryzae (strain MAFF 311018).